The following is an 89-amino-acid chain: Sec-independent protein translocase protein TatA (89 aa).

A helical transmembrane segment spans residues 1-21; the sequence is MGGISIWQLLIIAVIVVLLFG. A disordered region spans residues 65–89; the sequence is ADKQADTNQEQAKTEDAKRHDKEQV. Residues 76-89 show a composition bias toward basic and acidic residues; the sequence is AKTEDAKRHDKEQV.

Belongs to the TatA/E family. As to quaternary structure, the Tat system comprises two distinct complexes: a TatABC complex, containing multiple copies of TatA, TatB and TatC subunits, and a separate TatA complex, containing only TatA subunits. Substrates initially bind to the TatABC complex, which probably triggers association of the separate TatA complex to form the active translocon.

The protein resides in the cell inner membrane. In terms of biological role, part of the twin-arginine translocation (Tat) system that transports large folded proteins containing a characteristic twin-arginine motif in their signal peptide across membranes. TatA could form the protein-conducting channel of the Tat system. This chain is Sec-independent protein translocase protein TatA, found in Shigella flexneri.